The following is a 382-amino-acid chain: Ubiquitin-like protease 4 (382 aa).

The interval 46 to 106 (GTHLDGSIGE…DNDEWTNQKR (61 aa)) is disordered. The span at 84 to 100 (DLVDEDEEEEDEEDNDE) shows a compositional bias: acidic residues.

This sequence belongs to the peptidase C48 family. As to expression, expressed in hermaphrodite-specific neurons, head muscles, body wall muscles and pharyngeal cells.

It is found in the cytoplasm. Its subcellular location is the cytoskeleton. It localises to the microtubule organizing center. The protein localises to the centrosome. The protein resides in the nucleus. It is found in the mitochondrion matrix. Its pathway is protein modification; protein sumoylation. Protease required for deconjugation of smo-1 conjugates from target proteins which is necessary for cell cycle progression. Required for respiration and the maintenance of normal mitochondrial homeostasis. In response to mitochondrial stress, required for the removal of smo-1 conjugates from the transcription factor dve-1, which promotes the translocation of dve-1 from the cytosol to the nucleus to initiate the mitochondrial unfolded protein response. Furthermore, removes the smo-1 conjugates from the transcription factor atfs-1 to promote its stability and activate the mitochondrial unfolded protein response. Also plays a role in promoting mitochondrial unfolded protein response-mediated innate immunity following infection with P.aeruginosa. In Caenorhabditis elegans, this protein is Ubiquitin-like protease 4.